A 138-amino-acid chain; its full sequence is Putative pre-16S rRNA nuclease (138 aa).

The protein belongs to the YqgF nuclease family.

It is found in the cytoplasm. Its function is as follows. Could be a nuclease involved in processing of the 5'-end of pre-16S rRNA. The sequence is that of Putative pre-16S rRNA nuclease from Caldicellulosiruptor bescii (strain ATCC BAA-1888 / DSM 6725 / KCTC 15123 / Z-1320) (Anaerocellum thermophilum).